The following is a 254-amino-acid chain: MEVAEAGVDGVAGRRQQEEASGAAPFGRSSSLIGAAGFDGALRELKDLRSQLHQTADCCEKAFLDTEKKKLILESTKGYICDAIVAVIDHLGTVSSKLEQQLQEKIEITQTEKKLNFLKQRLLTCEQYAITLKLLTVRGDNDAIQYHRRYLSQSTGGTKEENGANSRKDDVKFVEYNSPTIPGAILTFKPYDIQSTIGRERSVATTDSESPTTDAKSSFSFRAEDVPIVLAEHRKKANHGSNILSFIRKGRRHA.

The interval 1–26 (MEVAEAGVDGVAGRRQQEEASGAAPF) is disordered.

This sequence belongs to the ABI family. In terms of assembly, binds SCAR.

It is found in the cytoplasm. Its subcellular location is the cytoskeleton. In terms of biological role, involved in regulation of actin and microtubule organization. Part of a WAVE complex that activates the Arp2/3 complex. The sequence is that of Probable protein ABIL5 from Oryza sativa subsp. japonica (Rice).